The sequence spans 51 residues: Lantibiotic streptococcin A-FF22 (51 aa).

The propeptide occupies 1–25; it reads MEKNNEVINSIQEVSLEELDQIIGA. 2 consecutive cross-links (beta-methyllanthionine (Thr-Cys)) follow at residues 33–38 and 42–50; these read TISHEC and TWAFLATCC. The lanthionine (Ser-Cys) cross-link spans 35–49; it reads SHECHLNTWAFLATC. 2,3-didehydrobutyrine is present on T48.

This sequence belongs to the type A lantibiotic family. In terms of processing, maturation of lantibiotics involves the enzymatic conversion of Thr, and Ser into dehydrated AA and the formation of thioether bonds with cysteine. This is followed by membrane translocation and cleavage of the modified precursor.

It localises to the secreted. The protein resides in the cell surface. Functionally, lanthionine-containing peptide antibiotic (lantibiotic) active on certain Gram-positive bacteria. The bactericidal activity of lantibiotics is based on depolarization of energized bacterial cytoplasmic membranes, initiated by the formation of aqueous transmembrane pores. This chain is Lantibiotic streptococcin A-FF22 (scnA), found in Streptococcus pyogenes.